A 108-amino-acid chain; its full sequence is FK506-binding protein 1A (108 aa).

Positions 1-20 (MGVEVQRISPGDGKNFPKPG) are disordered. Positions 20–108 (GDTVSIHYTG…TFEVELLKIN (89 aa)) constitute a PPIase FKBP-type domain.

The protein belongs to the FKBP-type PPIase family. FKBP1 subfamily.

The protein resides in the cytoplasm. The enzyme catalyses [protein]-peptidylproline (omega=180) = [protein]-peptidylproline (omega=0). Inhibited by both FK506 and rapamycin. In terms of biological role, PPIases accelerate the folding of proteins. It catalyzes the cis-trans isomerization of proline imidic peptide bonds in oligopeptides. This Emericella nidulans (strain FGSC A4 / ATCC 38163 / CBS 112.46 / NRRL 194 / M139) (Aspergillus nidulans) protein is FK506-binding protein 1A (fprA).